The sequence spans 645 residues: COP9 signalosome complex subunit 10 (645 aa).

Acidic residues predominate over residues 1–45 (MSDEDNNYDDFMLSDDEGMESIEMEEETDDEDKQNIEINEDNSQD). Residues 1–63 (MSDEDNNYDD…HKQHEQGTFE (63 aa)) are disordered. The span at 46–63 (DQDRGAARHKQHEQGTFE) shows a compositional bias: basic and acidic residues. A PCI domain is found at 348–543 (DLSFALMRYY…DLVYFGDENK (196 aa)).

In terms of assembly, component of a COP9 signalosome-like (CSN) complex, composed of at least RRI1/CSN5, CSN9, RRI2/CSN10, PCI8/CSN11, CSN12 and CSI1. In the complex, it probably interacts directly with CSN12.

The protein resides in the cytoplasm. The protein localises to the nucleus. In terms of biological role, component of the COP9 signalosome (CSN) complex that acts as an regulator of the ubiquitin (Ubl) conjugation pathway by mediating the deneddylation of the cullin subunit of SCF-type E3 ubiquitin-protein ligase complexes. The CSN complex is involved in the regulation of the mating pheromone response. In Saccharomyces cerevisiae (strain ATCC 204508 / S288c) (Baker's yeast), this protein is COP9 signalosome complex subunit 10 (RRI2).